Here is a 160-residue protein sequence, read N- to C-terminus: 6,7-dimethyl-8-ribityllumazine synthase (160 aa).

5-amino-6-(D-ribitylamino)uracil is bound by residues F22, 57–59, and 81–83; these read AVE and AVI. 86-87 serves as a coordination point for (2S)-2-hydroxy-3-oxobutyl phosphate; it reads GT. Catalysis depends on H89, which acts as the Proton donor. Residue F114 coordinates 5-amino-6-(D-ribitylamino)uracil. Residue R128 coordinates (2S)-2-hydroxy-3-oxobutyl phosphate.

Belongs to the DMRL synthase family. In terms of assembly, forms an icosahedral capsid composed of 60 subunits, arranged as a dodecamer of pentamers.

The enzyme catalyses (2S)-2-hydroxy-3-oxobutyl phosphate + 5-amino-6-(D-ribitylamino)uracil = 6,7-dimethyl-8-(1-D-ribityl)lumazine + phosphate + 2 H2O + H(+). It functions in the pathway cofactor biosynthesis; riboflavin biosynthesis; riboflavin from 2-hydroxy-3-oxobutyl phosphate and 5-amino-6-(D-ribitylamino)uracil: step 1/2. Functionally, catalyzes the formation of 6,7-dimethyl-8-ribityllumazine by condensation of 5-amino-6-(D-ribitylamino)uracil with 3,4-dihydroxy-2-butanone 4-phosphate. This is the penultimate step in the biosynthesis of riboflavin. The protein is 6,7-dimethyl-8-ribityllumazine synthase of Shewanella sediminis (strain HAW-EB3).